We begin with the raw amino-acid sequence, 97 residues long: Nucleoid-associated protein HP_0035 (97 aa).

This sequence belongs to the YbaB/EbfC family. Homodimer.

It localises to the cytoplasm. Its subcellular location is the nucleoid. Binds to DNA and alters its conformation. May be involved in regulation of gene expression, nucleoid organization and DNA protection. In Helicobacter pylori (strain ATCC 700392 / 26695) (Campylobacter pylori), this protein is Nucleoid-associated protein HP_0035.